The sequence spans 372 residues: Cytochrome b (372 aa).

4 helical membrane-spanning segments follow: residues 25-45 (FGSM…FLAI), 69-90 (WIIQ…YTHI), 105-125 (WLSG…GYVL), and 170-190 (FFAL…IHII). His75 and His89 together coordinate heme b. Heme b contacts are provided by His174 and His188. A ubiquinone is bound at residue His193. 4 helical membrane passes run 218–238 (YKDT…MSFM), 280–300 (LGGT…PFTH), 312–332 (LTQI…WSAT), and 339–358 (FIFI…IINP).

Belongs to the cytochrome b family. The cytochrome bc1 complex contains 3 respiratory subunits (MT-CYB, CYC1 and UQCRFS1), 2 core proteins (UQCRC1 and UQCRC2) and probably 6 low-molecular weight proteins. Requires heme b as cofactor.

It localises to the mitochondrion inner membrane. In terms of biological role, component of the ubiquinol-cytochrome c reductase complex (complex III or cytochrome b-c1 complex) that is part of the mitochondrial respiratory chain. The b-c1 complex mediates electron transfer from ubiquinol to cytochrome c. Contributes to the generation of a proton gradient across the mitochondrial membrane that is then used for ATP synthesis. The polypeptide is Cytochrome b (MT-CYB) (Hydrophis semperi (Lake Taal snake)).